A 185-amino-acid polypeptide reads, in one-letter code: Peptide deformylase (185 aa).

C98 and H140 together coordinate Fe cation. E141 is an active-site residue. H144 provides a ligand contact to Fe cation.

Belongs to the polypeptide deformylase family. Fe(2+) serves as cofactor.

The catalysed reaction is N-terminal N-formyl-L-methionyl-[peptide] + H2O = N-terminal L-methionyl-[peptide] + formate. In terms of biological role, removes the formyl group from the N-terminal Met of newly synthesized proteins. Requires at least a dipeptide for an efficient rate of reaction. N-terminal L-methionine is a prerequisite for activity but the enzyme has broad specificity at other positions. The chain is Peptide deformylase from Parabacteroides distasonis (strain ATCC 8503 / DSM 20701 / CIP 104284 / JCM 5825 / NCTC 11152).